Here is a 266-residue protein sequence, read N- to C-terminus: Protein PYRICULARIA ORYZAE RESISTANCE 21 (266 aa).

The region spanning 1–68 is the HMA domain; sequence MGILVILVDL…IWCKAGKIIK (68 aa). A metal cation is bound by residues Cys12 and Cys15. The disordered stretch occupies residues 129–156; sequence CEKPKPCEKPPPCKPEEPPKPPPEKPPP. Over residues 142–156 the composition is skewed to basic and acidic residues; the sequence is KPEEPPKPPPEKPPP.

In terms of biological role, involved in defense responses. Contributes to slowing defense responses toward Magnaporthe oryzae. The chain is Protein PYRICULARIA ORYZAE RESISTANCE 21 from Oryza sativa subsp. japonica (Rice).